The chain runs to 867 residues: Prominin-1 (867 aa).

Residues 1 to 19 (MALVFSALLLLGLCGKISS) form the signal peptide. Topologically, residues 20-107 (EGQPAFHNTP…VLALKIALYE (88 aa)) are extracellular. Residues 108–128 (IGVLICAILGLLFIILMPLVG) traverse the membrane as a helical segment. Over 129–158 (CFFCMCRCCNKCGGEMHQRQKQNAPCRRKC) the chain is Cytoplasmic. Residues 159 to 179 (LGLSLLVICLLMSLGIIYGFV) form a helical membrane-spanning segment. Residues 180–434 (ANQQTRTRIK…LPKLEEYDSY (255 aa)) lie on the Extracellular side of the membrane. Lys-226, Lys-258, and Lys-265 each carry N6-acetyllysine. N-linked (GlcNAc...) asparagine glycans are attached at residues Asn-273, Asn-291, Asn-332, Asn-374, and Asn-415. Residues 435–455 (WWLGGLIVCFLLTLIVTFFFL) form a helical membrane-spanning segment. Over 456-487 (GLLCGVFGYDKHATPTRRGCVSNTGGIFLMAG) the chain is Cytoplasmic. A helical transmembrane segment spans residues 488-508 (VGFGFLFCWILMILVVLTFVV). Over 509 to 794 (GANVEKLLCE…LCGYVADPLN (286 aa)) the chain is Extracellular. N-linked (GlcNAc...) asparagine glycosylation is found at Asn-554, Asn-581, and Asn-732. A helical membrane pass occupies residues 795–815 (LFWFGIGKATVLLLPAVIIAI). The Cytoplasmic segment spans residues 816–867 (KLAKYYRRMDSEDVYDDVETVPMKNLEIGSNGYHKDHLYGVHNPVMTSPSRY). Ser-865 carries the post-translational modification Phosphoserine.

It belongs to the prominin family. As to quaternary structure, interacts with CDHR1 and with actin filaments. Interacts with NAT8 and NAT8B. Acetylation at Lys-226, Lys-258 and Lys-265 by NAT8 and NAT8B may control PROM1 protein expression and its function in cell apoptosis. In terms of tissue distribution, in the submandibular gland, expressed on the apical side of epithelial cells. In the parotid gland, expressed in the intercalated ducts. In the sublingual gland, expressed in intercalated ducts. In the extraorbital lacrimal gland, expressed in the intercalated tubules and larger intralobular ducts. Expressed in the retina. Present in urine within small membrane particles (at protein level). In the embryo, expressed on the apical side of neuroepithelial cells and of other epithelia such as lung buds, gut and ureter buds. In the adult, expressed at the apical side of the kidney tubules and of the ependymal layer of the brain. Not expressed in gut, liver, lung, pituitary, adrenal, heart or spleen. Localized to the nascent disk membranes at the base of the rod outer segment in the retina (at protein level).

The protein resides in the apical cell membrane. The protein localises to the cell projection. It is found in the microvillus membrane. Its subcellular location is the cilium. It localises to the photoreceptor outer segment. The protein resides in the endoplasmic reticulum. The protein localises to the endoplasmic reticulum-Golgi intermediate compartment. In terms of biological role, may play a role in cell differentiation, proliferation and apoptosis. Binds cholesterol in cholesterol-containing plasma membrane microdomains and may play a role in the organization of the apical plasma membrane in epithelial cells. During early retinal development acts as a key regulator of disk morphogenesis. Involved in regulation of MAPK and Akt signaling pathways. In neuroblastoma cells suppresses cell differentiation such as neurite outgrowth in a RET-dependent manner. This chain is Prominin-1 (Prom1), found in Mus musculus (Mouse).